A 322-amino-acid polypeptide reads, in one-letter code: ATP-dependent 6-phosphofructokinase (322 aa).

Position 11 (G11) interacts with ATP. An ADP-binding site is contributed by 21–25 (RAVVR). ATP-binding positions include 72 to 73 (RC) and 102 to 105 (GDGS). D103 is a Mg(2+) binding site. 127–129 (TID) contributes to the substrate binding site. D129 (proton acceptor) is an active-site residue. ADP is bound at residue R156. Residues R164 and 171–173 (MGR) contribute to the substrate site. Residues 187–189 (GAE), R213, and 215–217 (KKH) each bind ADP. Residues E224, R245, and 251–254 (HVQR) each bind substrate.

The protein belongs to the phosphofructokinase type A (PFKA) family. ATP-dependent PFK group I subfamily. Prokaryotic clade 'B1' sub-subfamily. Homotetramer. Mg(2+) serves as cofactor.

Its subcellular location is the cytoplasm. The catalysed reaction is beta-D-fructose 6-phosphate + ATP = beta-D-fructose 1,6-bisphosphate + ADP + H(+). The protein operates within carbohydrate degradation; glycolysis; D-glyceraldehyde 3-phosphate and glycerone phosphate from D-glucose: step 3/4. With respect to regulation, allosterically activated by ADP and other diphosphonucleosides, and allosterically inhibited by phosphoenolpyruvate. Functionally, catalyzes the phosphorylation of D-fructose 6-phosphate to fructose 1,6-bisphosphate by ATP, the first committing step of glycolysis. The chain is ATP-dependent 6-phosphofructokinase from Staphylococcus aureus (strain JH1).